A 565-amino-acid chain; its full sequence is Beta-hexosaminidase subunit beta (565 aa).

The N-terminal stretch at Met-1 to Ala-13 is a signal peptide. A glycan (N-linked (GlcNAc...) asparagine) is linked at Asn-71. Glu-347 functions as the Proton donor in the catalytic mechanism.

The protein belongs to the glycosyl hydrolase 20 family. Heterodimer of one alpha subunit and one beta subunit. Glycosylated.

The protein localises to the cytoplasmic granule. It is found in the secreted. It catalyses the reaction Hydrolysis of terminal non-reducing N-acetyl-D-hexosamine residues in N-acetyl-beta-D-hexosaminides.. In terms of biological role, hydrolyzes the non-reducing end N-acetyl-D-hexosamine and/or sulfated N-acetyl-D-hexosamine of glycoconjugates. May contribute to amoebic pathogenicity and may be involved in the destruction of extracellular matrix components. This Entamoeba histolytica (strain ATCC 30459 / HM-1:IMSS / ABRM) protein is Beta-hexosaminidase subunit beta.